Consider the following 233-residue polypeptide: UPF0502 protein YpsIP31758_2048 (233 aa).

This sequence belongs to the UPF0502 family.

The polypeptide is UPF0502 protein YpsIP31758_2048 (Yersinia pseudotuberculosis serotype O:1b (strain IP 31758)).